The primary structure comprises 426 residues: UDP-N-acetylglucosamine 1-carboxyvinyltransferase (426 aa).

22–23 (KN) contributes to the phosphoenolpyruvate binding site. Residue Arg99 participates in UDP-N-acetyl-alpha-D-glucosamine binding. Catalysis depends on Cys123, which acts as the Proton donor. 2-(S-cysteinyl)pyruvic acid O-phosphothioketal is present on Cys123. UDP-N-acetyl-alpha-D-glucosamine contacts are provided by residues 128–132 (RPIDL), Asp313, and Ile335.

It belongs to the EPSP synthase family. MurA subfamily.

Its subcellular location is the cytoplasm. The enzyme catalyses phosphoenolpyruvate + UDP-N-acetyl-alpha-D-glucosamine = UDP-N-acetyl-3-O-(1-carboxyvinyl)-alpha-D-glucosamine + phosphate. It functions in the pathway cell wall biogenesis; peptidoglycan biosynthesis. In terms of biological role, cell wall formation. Adds enolpyruvyl to UDP-N-acetylglucosamine. The protein is UDP-N-acetylglucosamine 1-carboxyvinyltransferase of Zymomonas mobilis subsp. mobilis (strain ATCC 31821 / ZM4 / CP4).